We begin with the raw amino-acid sequence, 56 residues long: UPF0391 membrane protein Bd1438 (56 aa).

The next 2 membrane-spanning stretches (helical) occupy residues 4–24 and 33–53; these read AAIA…SGVA and ILLF…LVSG.

The protein belongs to the UPF0391 family.

The protein resides in the cell membrane. The chain is UPF0391 membrane protein Bd1438 from Bdellovibrio bacteriovorus (strain ATCC 15356 / DSM 50701 / NCIMB 9529 / HD100).